The sequence spans 824 residues: Intraflagellar transport protein 88 homolog (824 aa).

The disordered stretch occupies residues 113-134 (FDPLSQSRGPASPLEAKKKDSP). TPR repeat units follow at residues 197–230 (YSVL…KMFS), 233–266 (GILK…VPSV), 272–305 (IKIM…APNL), 307–338 (AGYN…PLEI), 415–448 (NDLE…DSRV), 450–483 (SAAA…DRYN), 484–517 (PAAL…DSSC), 518–551 (TEAL…LRNS), 552–585 (AEVL…IPTD), 586–619 (PQVL…FPCN), 620–653 (IEVI…QPTQ), and 654–687 (VKWQ…FPEN). Residues 724-824 (EQRIKSGRDG…EELGDDLLPE (101 aa)) form a disordered region. A compositionally biased stretch (polar residues) spans 748–757 (DSGQNYSASS). Residues 797–808 (ERPKTAAKKRID) are compositionally biased toward basic and acidic residues. Acidic residues predominate over residues 809 to 824 (EDDFADEELGDDLLPE).

In terms of assembly, component of the IFT complex B, at least composed of IFT20, IFT22, IFT25, IFT27, IFT46, IFT52, TRAF3IP1/IFT54, IFT57, IFT74, IFT80, IFT81, and IFT88. Interacts with IFT20, IFT22, IFT25, IFT27, IFT52, TRAF3IP1, IFT74, IFT80 and IFT81. Interacts with IFT172. Interacts with IFT57. Interacts with IFT46. Interacts with IFT70B. Interacts with C2CD3. Interacts with ENTR1 (via N-terminus). Interacts with LRRC56. Interacts with DZIP1. Interacts with CCDC38. Interacts with CCDC146. Interacts with CFAP53. As to expression, expressed in the heart, brain, liver, lung, kidney, skeletal muscle and pancreas.

The protein resides in the cytoplasm. It localises to the cytoskeleton. It is found in the microtubule organizing center. Its subcellular location is the centrosome. The protein localises to the centriole. The protein resides in the cell projection. It localises to the cilium. It is found in the cilium basal body. Its subcellular location is the flagellum. In terms of biological role, positively regulates primary cilium biogenesis. Also involved in autophagy since it is required for trafficking of ATG16L and the expansion of the autophagic compartment. This is Intraflagellar transport protein 88 homolog (IFT88) from Homo sapiens (Human).